A 232-amino-acid chain; its full sequence is Adenosylcobinamide-GDP ribazoletransferase (232 aa).

Helical transmembrane passes span 31 to 51 (LPSF…LGAL), 59 to 79 (VFFL…GFLD), 102 to 122 (VGPF…NLYL), 126 to 146 (PFYF…LMAF), 167 to 187 (LLIS…YIIS), and 209 to 229 (VTGD…LLIL).

Belongs to the CobS family. The cofactor is Mg(2+).

The protein localises to the cell inner membrane. It catalyses the reaction alpha-ribazole + adenosylcob(III)inamide-GDP = adenosylcob(III)alamin + GMP + H(+). The catalysed reaction is alpha-ribazole 5'-phosphate + adenosylcob(III)inamide-GDP = adenosylcob(III)alamin 5'-phosphate + GMP + H(+). It functions in the pathway cofactor biosynthesis; adenosylcobalamin biosynthesis; adenosylcobalamin from cob(II)yrinate a,c-diamide: step 7/7. Its function is as follows. Joins adenosylcobinamide-GDP and alpha-ribazole to generate adenosylcobalamin (Ado-cobalamin). Also synthesizes adenosylcobalamin 5'-phosphate from adenosylcobinamide-GDP and alpha-ribazole 5'-phosphate. The sequence is that of Adenosylcobinamide-GDP ribazoletransferase from Thermosipho africanus (strain TCF52B).